The sequence spans 391 residues: Beta sliding clamp (391 aa).

Belongs to the beta sliding clamp family. Forms a ring-shaped head-to-tail homodimer around DNA which binds and tethers DNA polymerases and other proteins to the DNA. The DNA replisome complex has a single clamp-loading complex (3 tau and 1 each of delta, delta', psi and chi subunits) which binds 3 Pol III cores (1 core on the leading strand and 2 on the lagging strand) each with a beta sliding clamp dimer. Additional proteins in the replisome are other copies of gamma, psi and chi, Ssb, DNA helicase and RNA primase.

Its subcellular location is the cytoplasm. Confers DNA tethering and processivity to DNA polymerases and other proteins. Acts as a clamp, forming a ring around DNA (a reaction catalyzed by the clamp-loading complex) which diffuses in an ATP-independent manner freely and bidirectionally along dsDNA. Initially characterized for its ability to contact the catalytic subunit of DNA polymerase III (Pol III), a complex, multichain enzyme responsible for most of the replicative synthesis in bacteria; Pol III exhibits 3'-5' exonuclease proofreading activity. The beta chain is required for initiation of replication as well as for processivity of DNA replication. This chain is Beta sliding clamp (dnaN), found in Synechocystis sp. (strain ATCC 27184 / PCC 6803 / Kazusa).